A 151-amino-acid chain; its full sequence is Ribosome maturation factor RimP (151 aa).

This sequence belongs to the RimP family.

It localises to the cytoplasm. Its function is as follows. Required for maturation of 30S ribosomal subunits. In Shewanella frigidimarina (strain NCIMB 400), this protein is Ribosome maturation factor RimP.